Here is a 554-residue protein sequence, read N- to C-terminus: Glucose-6-phosphate isomerase (554 aa).

Residue E359 is the Proton donor of the active site. Active-site residues include H390 and K518.

The protein belongs to the GPI family.

It localises to the cytoplasm. The enzyme catalyses alpha-D-glucose 6-phosphate = beta-D-fructose 6-phosphate. Its pathway is carbohydrate biosynthesis; gluconeogenesis. It functions in the pathway carbohydrate degradation; glycolysis; D-glyceraldehyde 3-phosphate and glycerone phosphate from D-glucose: step 2/4. Functionally, catalyzes the reversible isomerization of glucose-6-phosphate to fructose-6-phosphate. The protein is Glucose-6-phosphate isomerase of Pseudomonas syringae pv. tomato (strain ATCC BAA-871 / DC3000).